The primary structure comprises 402 residues: Mitochondrial inner membrane protein OXA1 (402 aa).

The transit peptide at 1–42 (MFKLTSRLVTSRFAASSRLATARTIVLPRPHPSWISFQAKRF) directs the protein to the mitochondrion. The Mitochondrial intermembrane portion of the chain corresponds to 43–118 (NSTGPNANDV…PSDIIQHVLE (76 aa)). The helical transmembrane segment at 119-139 (AVHVYSGLPWWGTIAATTILI) threads the bilayer. Residues 140–199 (RCLMFPLYVKSSDTVARNSHIKPELDALNNKLMSTTDLQQGQLVAMQRKKLLSSHGIKNR) lie on the Mitochondrial matrix side of the membrane. Residues 200–220 (WLAAPMLQIPIALGFFNALRH) traverse the membrane as a helical segment. The Mitochondrial intermembrane segment spans residues 221-239 (MANYPVDGFANQGVAWFTD). A helical membrane pass occupies residues 240-260 (LTQADPYLGLQVITAAVFISF). Over 261–275 (TRLGGETGAQQFSSP) the chain is Mitochondrial matrix. The helical transmembrane segment at 276–292 (MKRLFTILPIISIPATM) threads the bilayer. The Mitochondrial intermembrane portion of the chain corresponds to 293-297 (NLSSA). Residues 298 to 316 (VVLYFAFNGAFSVLQTMIL) form a helical membrane-spanning segment. The Mitochondrial matrix segment spans residues 317-402 (RNKWVRSKLK…HKSNFINNKK (86 aa)). Residues 366–385 (RQLMQDNEKKLQESFKEKRQ) show a composition bias toward basic and acidic residues. The disordered stretch occupies residues 366–386 (RQLMQDNEKKLQESFKEKRQN).

The protein belongs to the OXA1/ALB3/YidC family. In terms of assembly, interacts with the large ribosome subunit of mitochondrial ribosome. Interacts directly with MRP20. Interacts with OXA1.

It localises to the mitochondrion inner membrane. In terms of biological role, mitochondrial inner membrane insertase that mediates the insertion of both mitochondrion-encoded precursors and nuclear-encoded proteins from the matrix into the inner membrane. Links mitoribosomes with the inner membrane. Forms pores capable of accommodating translocating protein segments. Essential for the activity and assembly of cytochrome c oxidase. Plays a central role in the translocation and export of the N-terminal part of the COX2 protein into the mitochondrial intermembrane space. This chain is Mitochondrial inner membrane protein OXA1, found in Saccharomyces cerevisiae (strain ATCC 204508 / S288c) (Baker's yeast).